We begin with the raw amino-acid sequence, 131 residues long: Phosphoribosyl-AMP cyclohydrolase (131 aa).

D78 contributes to the Mg(2+) binding site. C79 serves as a coordination point for Zn(2+). Mg(2+) is bound by residues D80 and D82. Zn(2+) contacts are provided by C96 and C103.

It belongs to the PRA-CH family. Homodimer. The cofactor is Mg(2+). Zn(2+) serves as cofactor.

The protein localises to the cytoplasm. The enzyme catalyses 1-(5-phospho-beta-D-ribosyl)-5'-AMP + H2O = 1-(5-phospho-beta-D-ribosyl)-5-[(5-phospho-beta-D-ribosylamino)methylideneamino]imidazole-4-carboxamide. It functions in the pathway amino-acid biosynthesis; L-histidine biosynthesis; L-histidine from 5-phospho-alpha-D-ribose 1-diphosphate: step 3/9. Catalyzes the hydrolysis of the adenine ring of phosphoribosyl-AMP. The chain is Phosphoribosyl-AMP cyclohydrolase from Neisseria gonorrhoeae (strain ATCC 700825 / FA 1090).